The following is a 122-amino-acid chain: Large ribosomal subunit protein uL14 (122 aa).

It belongs to the universal ribosomal protein uL14 family. In terms of assembly, part of the 50S ribosomal subunit. Forms a cluster with proteins L3 and L19. In the 70S ribosome, L14 and L19 interact and together make contacts with the 16S rRNA in bridges B5 and B8.

In terms of biological role, binds to 23S rRNA. Forms part of two intersubunit bridges in the 70S ribosome. In Microcystis aeruginosa (strain NIES-843 / IAM M-2473), this protein is Large ribosomal subunit protein uL14.